Here is a 330-residue protein sequence, read N- to C-terminus: Cathepsin S (330 aa).

The signal sequence occupies residues 1 to 17 (MKQLVCVLFVCSSAVTQ). Residues 18-114 (LHKDPTLDHH…ITYKSNPNQM (97 aa)) constitute a propeptide, activation peptide. N-linked (GlcNAc...) asparagine glycosylation is present at N104. Disulfide bonds link C126-C223, C136-C179, C170-C212, and C271-C319. The active site involves C139. Catalysis depends on residues H277 and N297.

It belongs to the peptidase C1 family.

It localises to the lysosome. It is found in the secreted. The protein localises to the cytoplasmic vesicle. The protein resides in the phagosome. It catalyses the reaction Similar to cathepsin L, but with much less activity on Z-Phe-Arg-|-NHMec, and more activity on the Z-Val-Val-Arg-|-Xaa compound.. Its function is as follows. Thiol protease. Key protease responsible for the removal of the invariant chain from MHC class II molecules and MHC class II antigen presentation. The bond-specificity of this proteinase is in part similar to the specificities of cathepsin L. This chain is Cathepsin S (CTSS), found in Saimiri boliviensis boliviensis (Bolivian squirrel monkey).